A 368-amino-acid chain; its full sequence is Xaa-Pro dipeptidase (368 aa).

Residues aspartate 223, aspartate 234, histidine 298, glutamate 327, and glutamate 341 each contribute to the Mn(2+) site.

This sequence belongs to the peptidase M24B family. Requires Mn(2+) as cofactor.

Its subcellular location is the cytoplasm. It catalyses the reaction Xaa-L-Pro dipeptide + H2O = an L-alpha-amino acid + L-proline. In Lactobacillus helveticus (Lactobacillus suntoryeus), this protein is Xaa-Pro dipeptidase (pepQ).